The primary structure comprises 582 residues: Hydrazine dehydrogenase (582 aa).

The N-terminal stretch at 1 to 32 is a signal peptide; the sequence is MRKFLKVTLASALIGCGVIGTVSSLMVKEAKA. The heme c site is built by cysteine 121, cysteine 124, histidine 125, histidine 141, cysteine 151, cysteine 154, histidine 155, histidine 159, cysteine 170, cysteine 175, histidine 176, histidine 191, cysteine 216, cysteine 219, histidine 220, cysteine 227, cysteine 230, histidine 231, histidine 234, cysteine 247, cysteine 250, histidine 251, histidine 267, cysteine 297, cysteine 300, histidine 301, histidine 306, cysteine 342, cysteine 345, histidine 346, histidine 454, and tyrosine 462. The interval 561–582 is disordered; that stretch reads GSHSAHHHESGHDPAARSMKEH. Positions 567 to 582 are enriched in basic and acidic residues; that stretch reads HHESGHDPAARSMKEH.

Homotrimer; subunits are linked by two covalent bonds between Tyr-462 of one subunit and heme P460 of an adjacent subunit. May form 24-mer of an octamer of trimers. Requires heme c as cofactor.

Its subcellular location is the anammoxosome. The catalysed reaction is hydrazine + 4 Fe(III)-[cytochrome c] = N2 + 4 Fe(II)-[cytochrome c] + 4 H(+). It functions in the pathway nitrogen metabolism. Its activity is regulated as follows. Is strongly and competitively inhibited by NO and hydroxylamine. In terms of biological role, catalyzes the four-electron oxidation of hydrazine to N2. The electrons derived from hydrazine oxidation may be transferred to the quinone pool and exploited to promote the generation of proton-motive force (pmf) across the anammoxosome membrane. Is involved in anaerobic ammonium oxidation (anammox), a biological process in which nitrite is used as the electron acceptor in the conversion of ammonium to dinitrogen gas (N2) and water; this bacterial process has a major role in the Earth's nitrogen cycle and has been estimated to synthesize up to 50% of the dinitrogen gas emitted into our atmosphere from the oceans. Cannot oxidize hydroxylamine to NO. In Kuenenia stuttgartiensis, this protein is Hydrazine dehydrogenase.